A 180-amino-acid polypeptide reads, in one-letter code: Endothelin-2 (180 aa).

An N-terminal signal peptide occupies residues 1–26 (MVALPTAWCSVALALLVALHEGKSQS). Positions 27-47 (AATSEEPPAPSARARGSHLRL) are excised as a propeptide. Disulfide bonds link Cys50–Cys64 and Cys52–Cys60. Residues 71-180 (VNTPGQTAPY…ESSHSRWRKR (110 aa)) constitute a propeptide that is removed on maturation. Residues 97–112 (CECYSTRDSACVTFCH) form an endothelin-like region. Residues 157 to 180 (NFTRHQQQKATREPESSHSRWRKR) are disordered.

It belongs to the endothelin/sarafotoxin family.

The protein localises to the secreted. In terms of biological role, endothelins are endothelium-derived vasoconstrictor peptides. This Atelerix albiventris (Middle-African hedgehog) protein is Endothelin-2 (EDN2).